The primary structure comprises 393 residues: Eukaryotic translation initiation factor 5 (393 aa).

A GTP-binding site is contributed by 28 to 35 (GKGNGIKT). Disordered stretches follow at residues 144–179 (KAVS…DEED) and 217–247 (EPQS…SISS). The region spanning 223–385 (EEQDEDDEQE…ETAEEEEEDE (163 aa)) is the W2 domain. Residues 224–233 (EQDEDDEQEE) show a composition bias toward acidic residues.

Belongs to the eIF-2-beta/eIF-5 family.

Catalyzes the hydrolysis of GTP bound to the 40S ribosomal initiation complex (40S.mRNA.Met-tRNA[F].eIF-2.GTP) with the subsequent joining of a 60S ribosomal subunit resulting in the release of eIF-2 and the guanine nucleotide. The subsequent joining of a 60S ribosomal subunit results in the formation of a functional 80S initiation complex (80S.mRNA.Met-tRNA[F]). The chain is Eukaryotic translation initiation factor 5 (eif5) from Dictyostelium discoideum (Social amoeba).